We begin with the raw amino-acid sequence, 206 residues long: Cytochrome c oxidase assembly protein CtaG (206 aa).

Topologically, residues 1–17 are cytoplasmic; that stretch reads MPEVQPSALPKPAPRLG. Residues 18 to 40 traverse the membrane as a helical; Signal-anchor for type II membrane protein segment; it reads RDAAVASICGFVVALMVGASFAA. Residues 41–206 lie on the Periplasmic side of the membrane; that stretch reads VPFYDWFCRT…GEPDQRKGNL (166 aa).

Belongs to the COX11/CtaG family.

The protein resides in the cell inner membrane. Functionally, exerts its effect at some terminal stage of cytochrome c oxidase synthesis, probably by being involved in the insertion of the copper B into subunit I. The chain is Cytochrome c oxidase assembly protein CtaG from Rhodopseudomonas palustris (strain BisB5).